Consider the following 179-residue polypeptide: Large ribosomal subunit protein uL6 (179 aa).

It belongs to the universal ribosomal protein uL6 family. In terms of assembly, part of the 50S ribosomal subunit.

Its function is as follows. This protein binds to the 23S rRNA, and is important in its secondary structure. It is located near the subunit interface in the base of the L7/L12 stalk, and near the tRNA binding site of the peptidyltransferase center. This Mycobacterium leprae (strain Br4923) protein is Large ribosomal subunit protein uL6.